We begin with the raw amino-acid sequence, 142 residues long: Protein archease (142 aa).

Asp-12, Asp-141, and Ile-142 together coordinate Ca(2+).

It belongs to the archease family.

Functionally, activates the tRNA-splicing ligase complex by facilitating the enzymatic turnover of catalytic subunit RtcB. Acts by promoting the guanylylation of RtcB, a key intermediate step in tRNA ligation. Can also alter the NTP specificity of RtcB such that ATP, dGTP or ITP is used efficiently. This chain is Protein archease, found in Pyrococcus furiosus (strain ATCC 43587 / DSM 3638 / JCM 8422 / Vc1).